The primary structure comprises 163 residues: Protein-export protein SecB (163 aa).

This sequence belongs to the SecB family. As to quaternary structure, homotetramer, a dimer of dimers. One homotetramer interacts with 1 SecA dimer.

It localises to the cytoplasm. In terms of biological role, one of the proteins required for the normal export of preproteins out of the cell cytoplasm. It is a molecular chaperone that binds to a subset of precursor proteins, maintaining them in a translocation-competent state. It also specifically binds to its receptor SecA. In Brucella canis (strain ATCC 23365 / NCTC 10854 / RM-666), this protein is Protein-export protein SecB.